The sequence spans 101 residues: DET1- and DDB1-associated protein 1 (101 aa).

The interval 67–101 (NAAKKRDQDQLEIGETSAPPRKIARTDSQEMSEDT) is disordered.

Belongs to the DDA1 family. In terms of assembly, component of numerous DCX (DDB1-CUL4-X-box) E3 ubiquitin-protein ligase complexes which consist of a core of DDB1, cullin-4 (CUL4A or CUL4B), DDA1 and RBX1.

Its pathway is protein modification; protein ubiquitination. In terms of biological role, functions as a component of numerous distinct DCX (DDB1-CUL4-X-box) E3 ubiquitin-protein ligase complexes which mediate the ubiquitination and subsequent proteasomal degradation of target proteins. In the DCX complexes, acts as a scaffolding subunit required to stabilize the complex. The chain is DET1- and DDB1-associated protein 1 from Xenopus tropicalis (Western clawed frog).